Consider the following 1421-residue polypeptide: Cytoadherence-linked asexual protein 3.2 (1421 aa).

Positions 1–24 (MVSFFKTPIIIFFFLLCLNEKVLC) are cleaved as a signal peptide. Intrachain disulfides connect C335–C363, C409–C415, C519–C547, and C523–C544. Residues 1203-1223 (NFFMELANGFMYAFCFFAISQ) form a helical membrane-spanning segment. The cysteines at positions 1352 and 1355 are disulfide-linked. The segment at 1371 to 1413 (GDKNTNETTEIKKQTSTYIDTEKMNEADSADSDDEKDFDTPDN) is disordered. The segment covering 1398–1412 (DSADSDDEKDFDTPD) has biased composition (acidic residues).

Component of the RhopH complex. RhopH complex is at least composed of CLAG3.1/CLAG3.2, RhopH2 and RhopH3 with a 1:1:1 subunit stoichiometry. CLAG3.1/CLAG3.2 mediates subunit association through independent contacts with RhopH2 and RhopH3, which do not directly interact with one another. Interacts with RhopH2. Interacts with RhopH3.

Its subcellular location is the host cell membrane. It localises to the parasitophorous vacuole membrane. The protein resides in the host cytoplasm. It is found in the cytoplasmic vesicle. The protein localises to the secretory vesicle. Its subcellular location is the rhoptry. Functionally, participates in the formation of new permeability pathways in Plasmodium-infected erythrocytes enabling the uptake of nutrients from the blood plasma. This Plasmodium falciparum protein is Cytoadherence-linked asexual protein 3.2.